The primary structure comprises 280 residues: 2-dehydro-3-deoxyphosphooctonate aldolase (280 aa).

It belongs to the KdsA family.

The protein localises to the cytoplasm. The catalysed reaction is D-arabinose 5-phosphate + phosphoenolpyruvate + H2O = 3-deoxy-alpha-D-manno-2-octulosonate-8-phosphate + phosphate. Its pathway is carbohydrate biosynthesis; 3-deoxy-D-manno-octulosonate biosynthesis; 3-deoxy-D-manno-octulosonate from D-ribulose 5-phosphate: step 2/3. The protein operates within bacterial outer membrane biogenesis; lipopolysaccharide biosynthesis. This is 2-dehydro-3-deoxyphosphooctonate aldolase from Thioalkalivibrio sulfidiphilus (strain HL-EbGR7).